Here is a 250-residue protein sequence, read N- to C-terminus: Galectin-3 (250 aa).

The segment at 1 to 60 (MADNFSLHDALSGSGNPNPQGWPGAWGNQPAGAGGYPGASYPGAYPGQAPPGAYPGQAPP) is disordered. A2 is subject to N-acetylalanine. Phosphoserine is present on residues S6 and S12. A run of 3 repeats spans residues 36–44 (YPGASYPGA), 45–53 (YPGQAPPGA), and 54–62 (YPGQAPPGA). The segment at 36–109 (YPGASYPGAY…AYPATGPYGA (74 aa)) is 8 X 9 AA tandem repeats of Y-P-G-X(3)-P-G-A. Residues 38 to 47 (GASYPGAYPG) show a composition bias toward low complexity. Over residues 48–60 (QAPPGAYPGQAPP) the composition is skewed to pro residues. Residues 63-69 (YPGAPGA) form a 4; approximate repeat. Residues 70 to 78 (YPGAPAPGV) form repeat 5. The 6; approximate repeat unit spans residues 79–88 (YPGPPSGPGA). Residues 89–100 (YPSSGQPSATGA) form a 7; approximate repeat. The stretch at 101 to 109 (YPATGPYGA) is one 8; approximate repeat. The region spanning 118-248 (YNLPLPGGVV…DIDLTSASYT (131 aa)) is the Galectin domain. A beta-D-galactoside is bound at residue 181-187 (WGREERQ). The residue at position 188 (S188) is a Phosphoserine. The short motif at 226-241 (KKLNEISKLGISGDID) is the Nuclear export signal element.

As to quaternary structure, probably forms homo- or heterodimers. Interacts with DMBT1. Interacts with CD6 and ALCAM. Forms a complex with the ITGA3, ITGB1 and CSPG4. Interacts with LGALS3BP, LYPD3, ZFTRAF1 and UACA. Interacts with TRIM16; this interaction mediates autophagy of damage endomembranes. Interacts with cargo receptor TMED10; the interaction mediates the translocation from the cytoplasm into the ERGIC (endoplasmic reticulum-Golgi intermediate compartment) and thereby secretion. In terms of tissue distribution, a major expression is found in the colonic epithelium. It is also abundant in the activated macrophages. Expressed in fetal membranes.

The protein localises to the cytoplasm. It is found in the nucleus. Its subcellular location is the secreted. In terms of biological role, galactose-specific lectin which binds IgE. May mediate with the alpha-3, beta-1 integrin the stimulation by CSPG4 of endothelial cells migration. Together with DMBT1, required for terminal differentiation of columnar epithelial cells during early embryogenesis. In the nucleus: acts as a pre-mRNA splicing factor. Involved in acute inflammatory responses including neutrophil activation and adhesion, chemoattraction of monocytes macrophages, opsonization of apoptotic neutrophils, and activation of mast cells. Together with TRIM16, coordinates the recognition of membrane damage with mobilization of the core autophagy regulators ATG16L1 and BECN1 in response to damaged endomembranes. In Homo sapiens (Human), this protein is Galectin-3.